Here is a 570-residue protein sequence, read N- to C-terminus: Vacuolar protein sorting-associated protein 45 (570 aa).

2 positions are modified to phosphoserine: Ser-307 and Ser-441.

The protein belongs to the STXBP/unc-18/SEC1 family. Interacts with STX6 and ZFYVE20. Ubiquitous; expression was highest in testis and in brain. Detected in every part of the brain.

The protein localises to the golgi apparatus membrane. The protein resides in the endosome membrane. May play a role in vesicle-mediated protein trafficking from the Golgi stack through the trans-Golgi network. This Rattus norvegicus (Rat) protein is Vacuolar protein sorting-associated protein 45 (Vps45).